A 739-amino-acid polypeptide reads, in one-letter code: Exocyst complex component 3-like protein (739 aa).

Disordered regions lie at residues 1–21 (MDSKIQPTLRPGSSCPRPEWP) and 698–718 (AALSSLQAGPPPSPSTGRRAL). A mediates interaction with EXOC2, EXOC4 and EXOC5 region spans residues 1–370 (MDSKIQPTLR…DVSQLEPLLT (370 aa)).

It belongs to the SEC6 family. Interacts with EXOC2, EXOC4 and EXOC5; may be part of the exocyst. As to expression, ubiquitously expressed.

It is found in the cytoplasmic vesicle. Its subcellular location is the secretory vesicle. In terms of biological role, as part of the exocyst, may play a role in regulated exocytosis of insulin granules. The protein is Exocyst complex component 3-like protein (Exoc3l1) of Mus musculus (Mouse).